A 335-amino-acid chain; its full sequence is Spliceosome-associated protein 49 (335 aa).

2 consecutive RRM domains span residues 13-84 (IYLG…PIRV) and 101-172 (LFVG…PITV). The disordered stretch occupies residues 204-223 (VTPQSTLPPGFSPATPAPTS).

The protein belongs to the SF3B4 family.

The protein localises to the nucleus. The chain is Spliceosome-associated protein 49 (sap49) from Schizosaccharomyces pombe (strain 972 / ATCC 24843) (Fission yeast).